Reading from the N-terminus, the 72-residue chain is MSLGVIAAAIAIGLSALGAGIGNGLIVSRTIEGVARQPELKGALQTIMFIGVALVEALPIIGVVIAFIVMNR.

2 helical membrane passes run 1-21 (MSLG…GAGI) and 49-69 (FIGV…AFIV).

It belongs to the ATPase C chain family. F-type ATPases have 2 components, F(1) - the catalytic core - and F(0) - the membrane proton channel. F(1) has five subunits: alpha(3), beta(3), gamma(1), delta(1), epsilon(1). F(0) has three main subunits: a(1), b(2) and c(10-14). The alpha and beta chains form an alternating ring which encloses part of the gamma chain. F(1) is attached to F(0) by a central stalk formed by the gamma and epsilon chains, while a peripheral stalk is formed by the delta and b chains.

It is found in the cell membrane. F(1)F(0) ATP synthase produces ATP from ADP in the presence of a proton or sodium gradient. F-type ATPases consist of two structural domains, F(1) containing the extramembraneous catalytic core and F(0) containing the membrane proton channel, linked together by a central stalk and a peripheral stalk. During catalysis, ATP synthesis in the catalytic domain of F(1) is coupled via a rotary mechanism of the central stalk subunits to proton translocation. Its function is as follows. Key component of the F(0) channel; it plays a direct role in translocation across the membrane. A homomeric c-ring of between 10-14 subunits forms the central stalk rotor element with the F(1) delta and epsilon subunits. The sequence is that of ATP synthase subunit c from Bacillus cytotoxicus (strain DSM 22905 / CIP 110041 / 391-98 / NVH 391-98).